We begin with the raw amino-acid sequence, 433 residues long: Divergent protein kinase domain 2B (433 aa).

The N-terminal stretch at 1-31 (MEPQLGPEAAALRPGWLALLLWVSALSCSFS) is a signal peptide. Asn-100 carries an N-linked (GlcNAc...) asparagine glycan.

Belongs to the DIPK family.

The protein localises to the secreted. This Homo sapiens (Human) protein is Divergent protein kinase domain 2B.